The chain runs to 510 residues: Protein PLASTID TRANSCRIPTIONALLY ACTIVE 16, chloroplastic (510 aa).

The span at Met-1–Pro-14 shows a compositional bias: polar residues. Residues Met-1–Arg-19 constitute a chloroplast transit peptide. Disordered stretches follow at residues Met-1 to Lys-24 and Leu-38 to Gln-58. The segment covering Thr-41 to Gln-51 has biased composition (basic and acidic residues). NADP(+) is bound at residue Ile-94–Pro-123. Residues Ala-354–Lys-403 adopt a coiled-coil conformation. At Ser-395 the chain carries Phosphoserine. Position 451 is a phosphothreonine; by STN7 (Thr-451). The segment at Arg-453–Arg-493 is disordered. Over residues Lys-479–Arg-493 the composition is skewed to basic and acidic residues.

This sequence belongs to the NAD(P)-dependent epimerase/dehydratase family. In terms of assembly, component of the plastid transcriptionally active chromosome required for plastid gene expression. Interacts with DEGP1 under high light conditions and maybe its degradation target. In terms of processing, excluded from chloroplast nucleoid when phosphorylated on Thr-451 by STN7 that may regulate membrane-anchoring functions of the nucleoid.

It localises to the plastid. Its subcellular location is the chloroplast stroma. It is found in the chloroplast nucleoid. The protein localises to the chloroplast thylakoid membrane. Its function is as follows. Probably involved in the regulation of plastid gene expression. In Arabidopsis thaliana (Mouse-ear cress), this protein is Protein PLASTID TRANSCRIPTIONALLY ACTIVE 16, chloroplastic.